A 176-amino-acid polypeptide reads, in one-letter code: Probable Brix domain-containing ribosomal biogenesis protein (176 aa).

A Brix domain is found at 6–176 (IEIVFTSSRD…QLYDRNKNIN (171 aa)).

Probably involved in the biogenesis of the ribosome. This is Probable Brix domain-containing ribosomal biogenesis protein from Sulfurisphaera tokodaii (strain DSM 16993 / JCM 10545 / NBRC 100140 / 7) (Sulfolobus tokodaii).